The sequence spans 158 residues: Cyclic pyranopterin monophosphate synthase (158 aa).

Substrate contacts are provided by residues 75–77 (LCH) and 113–114 (ME). The active site involves aspartate 128.

The protein belongs to the MoaC family. As to quaternary structure, homohexamer; trimer of dimers.

The enzyme catalyses (8S)-3',8-cyclo-7,8-dihydroguanosine 5'-triphosphate = cyclic pyranopterin phosphate + diphosphate. It participates in cofactor biosynthesis; molybdopterin biosynthesis. Functionally, catalyzes the conversion of (8S)-3',8-cyclo-7,8-dihydroguanosine 5'-triphosphate to cyclic pyranopterin monophosphate (cPMP). This Roseiflexus sp. (strain RS-1) protein is Cyclic pyranopterin monophosphate synthase.